The following is a 122-amino-acid chain: Holo-[acyl-carrier-protein] synthase (122 aa).

Aspartate 8 and glutamate 57 together coordinate Mg(2+).

Belongs to the P-Pant transferase superfamily. AcpS family. Mg(2+) is required as a cofactor.

It is found in the cytoplasm. It carries out the reaction apo-[ACP] + CoA = holo-[ACP] + adenosine 3',5'-bisphosphate + H(+). In terms of biological role, transfers the 4'-phosphopantetheine moiety from coenzyme A to a Ser of acyl-carrier-protein. In Protochlamydia amoebophila (strain UWE25), this protein is Holo-[acyl-carrier-protein] synthase.